Reading from the N-terminus, the 231-residue chain is ATP phosphoribosyltransferase (231 aa).

Belongs to the ATP phosphoribosyltransferase family. Short subfamily. In terms of assembly, heteromultimer composed of HisG and HisZ subunits.

Its subcellular location is the cytoplasm. The enzyme catalyses 1-(5-phospho-beta-D-ribosyl)-ATP + diphosphate = 5-phospho-alpha-D-ribose 1-diphosphate + ATP. It participates in amino-acid biosynthesis; L-histidine biosynthesis; L-histidine from 5-phospho-alpha-D-ribose 1-diphosphate: step 1/9. Catalyzes the condensation of ATP and 5-phosphoribose 1-diphosphate to form N'-(5'-phosphoribosyl)-ATP (PR-ATP). Has a crucial role in the pathway because the rate of histidine biosynthesis seems to be controlled primarily by regulation of HisG enzymatic activity. The polypeptide is ATP phosphoribosyltransferase (Psychrobacter arcticus (strain DSM 17307 / VKM B-2377 / 273-4)).